Reading from the N-terminus, the 461-residue chain is Glycine--tRNA ligase (461 aa).

The substrate site is built by Arg-100 and Glu-163. Residues 195-197, 205-210, 282-283, and 326-329 each bind ATP; these read RNE, FRTREF, EL, and GLGR. 210-214 serves as a coordination point for substrate; that stretch reads FEQME. Residue 322-326 coordinates substrate; that stretch reads EPAAG.

Belongs to the class-II aminoacyl-tRNA synthetase family. Homodimer.

It is found in the cytoplasm. The catalysed reaction is tRNA(Gly) + glycine + ATP = glycyl-tRNA(Gly) + AMP + diphosphate. In terms of biological role, catalyzes the attachment of glycine to tRNA(Gly). This is Glycine--tRNA ligase from Corynebacterium efficiens (strain DSM 44549 / YS-314 / AJ 12310 / JCM 11189 / NBRC 100395).